The chain runs to 166 residues: Dynein regulatory complex protein 8 (166 aa).

In terms of domain architecture, EF-hand spans 95–130 (DDYHTLLRAFRAFDPDGRGFIDAESFKSLLTGKGEA).

The protein belongs to the DRC8 family. Component of the nexin-dynein regulatory complex (N-DRC).

The protein resides in the cytoplasm. The protein localises to the cytoskeleton. It localises to the flagellum axoneme. Component of the nexin-dynein regulatory complex (N-DRC), a key regulator of ciliary/flagellar motility which maintains the alignment and integrity of the distal axoneme and regulates microtubule sliding in motile axonemes. The polypeptide is Dynein regulatory complex protein 8 (Chlamydomonas reinhardtii (Chlamydomonas smithii)).